The chain runs to 314 residues: uncharacterized protein (314 aa).

The first 20 residues, 1–20, serve as a signal peptide directing secretion; it reads MKKRAGIWAALLLAAVMLAG. Cysteine 21 carries N-palmitoyl cysteine lipidation. Cysteine 21 carries the S-diacylglycerol cysteine lipid modification. The Fe/B12 periplasmic-binding domain maps to 59-311; it reads KIVSLMPSNT…ELAESIYPDT (253 aa).

The protein belongs to the bacterial solute-binding protein 8 family. The complex is composed of two ATP-binding proteins (YvrA), two transmembrane proteins (YvrB) and a solute-binding protein (YvrC).

The protein resides in the cell membrane. In terms of biological role, probably part of an ABC transporter complex. This is an uncharacterized protein from Bacillus subtilis (strain 168).